Here is a 759-residue protein sequence, read N- to C-terminus: Short transient receptor potential channel 1 (759 aa).

The disordered stretch occupies residues 1 to 30; the sequence is MMAALYPSTDLSGVSSSSLPSSPSSSSPNE. Residues 1–311 are Cytoplasmic-facing; it reads MMAALYPSTD…FGQMSGYRRK (311 aa). Low complexity predominate over residues 15–28; the sequence is SSSSLPSSPSSSSP. ANK repeat units follow at residues 46-75, 83-109, and 124-146; these read LNEK…SGDL, LGRN…YGCQ, and MDVA…MLLK. Zn(2+) is bound by residues histidine 155, cysteine 159, cysteine 161, and cysteine 164. The segment at residues 312-345 is an intramembrane region (discontinuously helical); that stretch reads PTCKKIMTVLTVGIFWPVLSLCYLIAPKSQFGRI. Residues 346-352 are Cytoplasmic-facing; it reads IHTPFMK. Residues 353-370 traverse the membrane as a helical segment; sequence FIIHGASYFTFLLLLNLY. At 371–388 the chain is on the extracellular side; sequence SLVYNEDKKNTMGPALER. A helical transmembrane segment spans residues 389 to 405; it reads IDYLLILWIIGMIWSDI. At 406–421 the chain is on the cytoplasmic side; it reads KRLWYEGLEDFLEESR. A helical membrane pass occupies residues 422 to 441; sequence NQLSFVMNSLYLATFALKVV. Residues 442–462 are Extracellular-facing; that stretch reads AHNKFHDFADRKDWDAFHPTL. Residues 463-483 traverse the membrane as a helical segment; it reads VAEGLFAFANVLSYLRLFFMY. The Cytoplasmic segment spans residues 484–502; the sequence is TTSSILGPLQISMGQMLQD. A helical transmembrane segment spans residues 503 to 524; the sequence is FGKFLGMFLLVLFSFTIGLTQL. Residues 525-589 are Extracellular-facing; it reads YDKGYTSKEQ…GEELQSFVGA (65 aa). Cysteine 537 and cysteine 542 are joined by a disulfide. Residues 590-610 form a helical membrane-spanning segment; it reads VIVGTYNVVVVIVLTKLLVAM. At 611–759 the chain is on the cytoplasmic side; sequence LHKSFQLIAN…SKYAMFYPKN (149 aa).

This sequence belongs to the transient receptor (TC 1.A.4) family. STrpC subfamily. TRPC1 sub-subfamily. As to quaternary structure, heterotetramer with TRPC4 and/or TRPC5. Forms a heteromeric ion channel with TRPC4, with a 1:3 TRPC1:TRPC4 stoichiometry. Unlike other TRP channel proteins, does not form a homomeric channel. Interacts with TRPC4AP. Interacts with ITPR3. Interacts with MX1 and RNF24. Interacts with FKBP4. Interacts with PLSCR1. Interacts with PKD2L2. Forms a heterotetramer with PKD2 with a 2:2 stoichiometry; has distinct channel properties separate from PKD2 or TRPC1 homomers alone. Activation of PRKCA induces phosphorylation of TRPC1 and subsequent Ca2+ entry into cells. In terms of tissue distribution, expressed in brain, hippocampus, amygdala, Purkinje cells and single neurons in the cortex and striatum.

It localises to the cell membrane. It carries out the reaction Ca(2+)(in) = Ca(2+)(out). The enzyme catalyses Na(+)(in) = Na(+)(out). It catalyses the reaction Li(+)(in) = Li(+)(out). The catalysed reaction is Cs(+)(in) = Cs(+)(out). With respect to regulation, may be operated by a phosphatidylinositol second messenger system activated by receptor tyrosine kinases or G-protein coupled receptors. Also activated by intracellular calcium store depletion. In terms of biological role, forms a receptor-activated non-selective calcium permeant cation channel. Forms a heteromeric ion channel with TRPC4 or TRPC5 that has reduced calcium permeability compared to the homomeric TRPC4 or TRPC5 channel. Also permeable to monovalent ions including sodium, lithium and cesium ions. The chain is Short transient receptor potential channel 1 (Trpc1) from Rattus norvegicus (Rat).